A 159-amino-acid polypeptide reads, in one-letter code: MTIEPRATADLVDDIGPDVRSCDLQLRQFGGRPEFAGRVTTVRCFQDNALLKSVLSEPGDGGVLVIDGDGSLHTALVGDVIAALGRDNGWSGLIINGAVRDASTLRTLDIGIKALGTNPRKSTKTGAGERDVPVEFGGVTFTPGDVAYSDDDGIVIVTP.

Substrate is bound by residues 78–81 and Arg-100; that span reads GDVI. An a divalent metal cation-binding site is contributed by Asp-101.

Belongs to the class II aldolase/RraA-like family. In terms of assembly, homotrimer. Requires a divalent metal cation as cofactor.

The enzyme catalyses 4-hydroxy-4-methyl-2-oxoglutarate = 2 pyruvate. It carries out the reaction oxaloacetate + H(+) = pyruvate + CO2. In terms of biological role, catalyzes the aldol cleavage of 4-hydroxy-4-methyl-2-oxoglutarate (HMG) into 2 molecules of pyruvate. Also contains a secondary oxaloacetate (OAA) decarboxylase activity due to the common pyruvate enolate transition state formed following C-C bond cleavage in the retro-aldol and decarboxylation reactions. The chain is Putative 4-hydroxy-4-methyl-2-oxoglutarate aldolase from Mycobacterium sp. (strain JLS).